Reading from the N-terminus, the 276-residue chain is MSEPASIALQKEIVRELEVAETFDAEREIERRVAFLAERLTSTGLRALVLGISGGVDSTTAGRLCQLAVERARAAGHEALFYAMRLPHGVQADEDDAQQALSFIRPDRVLTVDIKPASDAALDALLAADVAFRDPHHQDFVHGNIKARQRMIAQYAVAGAHGGLVVGTDHAAEAVSGFFTKFGDGAADVVPLTGLTKRRVRAVGDALGAPAALVRKVPTADLETLDPGKADEDALGVTYEEIDDFLEGKPVTEQVFETIVTRYRQTDHKRRLPIAP.

51 to 58 (GISGGVDS) provides a ligand contact to ATP. Asp57 contributes to the Mg(2+) binding site. Residue Arg148 participates in deamido-NAD(+) binding. Thr168 contacts ATP. A Mg(2+)-binding site is contributed by Glu173. Lys181 and Asp188 together coordinate deamido-NAD(+). Residues Lys197 and Thr219 each coordinate ATP. 268-269 (HK) provides a ligand contact to deamido-NAD(+).

The protein belongs to the NAD synthetase family. As to quaternary structure, homodimer.

It carries out the reaction deamido-NAD(+) + NH4(+) + ATP = AMP + diphosphate + NAD(+) + H(+). Its pathway is cofactor biosynthesis; NAD(+) biosynthesis; NAD(+) from deamido-NAD(+) (ammonia route): step 1/1. Functionally, catalyzes the ATP-dependent amidation of deamido-NAD to form NAD. Uses ammonia as a nitrogen source. This chain is NH(3)-dependent NAD(+) synthetase, found in Streptomyces coelicolor (strain ATCC BAA-471 / A3(2) / M145).